We begin with the raw amino-acid sequence, 240 residues long: Uridylate kinase (240 aa).

13–16 (KASG) provides a ligand contact to ATP. Positions 21 to 26 (GSQGFG) are involved in allosteric activation by GTP. UMP is bound at residue G55. Positions 56 and 60 each coordinate ATP. Residues D75 and 136–143 (TGNPFFTT) each bind UMP. Positions 163, 164, 169, and 172 each coordinate ATP.

Belongs to the UMP kinase family. Homohexamer.

It is found in the cytoplasm. It catalyses the reaction UMP + ATP = UDP + ADP. It functions in the pathway pyrimidine metabolism; CTP biosynthesis via de novo pathway; UDP from UMP (UMPK route): step 1/1. Allosterically activated by GTP. Inhibited by UTP. Its function is as follows. Catalyzes the reversible phosphorylation of UMP to UDP. This chain is Uridylate kinase, found in Brucella anthropi (strain ATCC 49188 / DSM 6882 / CCUG 24695 / JCM 21032 / LMG 3331 / NBRC 15819 / NCTC 12168 / Alc 37) (Ochrobactrum anthropi).